Consider the following 211-residue polypeptide: Large ribosomal subunit protein eL13 (211 aa).

N6-acetyllysine is present on Lys16. Residues Ser52, Ser77, and Ser106 each carry the phosphoserine modification. Residues Lys123 and Lys145 each participate in a glycyl lysine isopeptide (Lys-Gly) (interchain with G-Cter in SUMO2) cross-link. Lys174 is covalently cross-linked (Glycyl lysine isopeptide (Lys-Gly) (interchain with G-Cter in SUMO1); alternate). Glycyl lysine isopeptide (Lys-Gly) (interchain with G-Cter in SUMO2); alternate cross-links involve residues Lys174 and Lys177. N6-acetyllysine; alternate is present on Lys177.

Belongs to the eukaryotic ribosomal protein eL13 family. As to quaternary structure, component of the 60S large ribosomal subunit (LSU).

Its subcellular location is the cytoplasm. In terms of biological role, component of the ribosome, a large ribonucleoprotein complex responsible for the synthesis of proteins in the cell. The small ribosomal subunit (SSU) binds messenger RNAs (mRNAs) and translates the encoded message by selecting cognate aminoacyl-transfer RNA (tRNA) molecules. The large subunit (LSU) contains the ribosomal catalytic site termed the peptidyl transferase center (PTC), which catalyzes the formation of peptide bonds, thereby polymerizing the amino acids delivered by tRNAs into a polypeptide chain. The nascent polypeptides leave the ribosome through a tunnel in the LSU and interact with protein factors that function in enzymatic processing, targeting, and the membrane insertion of nascent chains at the exit of the ribosomal tunnel. As part of the LSU, it is probably required for its formation and the maturation of rRNAs. Plays a role in bone development. This chain is Large ribosomal subunit protein eL13 (Rpl13), found in Rattus norvegicus (Rat).